A 137-amino-acid chain; its full sequence is NADPH-dependent 7-cyano-7-deazaguanine reductase (137 aa).

C51 functions as the Thioimide intermediate in the catalytic mechanism. Residue D58 is the Proton donor of the active site. Residues V73–L75 and H92–E93 each bind substrate.

This sequence belongs to the GTP cyclohydrolase I family. QueF type 1 subfamily.

The protein resides in the cytoplasm. It catalyses the reaction 7-aminomethyl-7-carbaguanine + 2 NADP(+) = 7-cyano-7-deazaguanine + 2 NADPH + 3 H(+). Its pathway is tRNA modification; tRNA-queuosine biosynthesis. Functionally, catalyzes the NADPH-dependent reduction of 7-cyano-7-deazaguanine (preQ0) to 7-aminomethyl-7-deazaguanine (preQ1). This is NADPH-dependent 7-cyano-7-deazaguanine reductase from Gloeobacter violaceus (strain ATCC 29082 / PCC 7421).